Consider the following 380-residue polypeptide: Bifunctional enzyme IspD/IspF (380 aa).

The tract at residues 1-224 (MTIPATYAAI…ERILGDAMDI (224 aa)) is 2-C-methyl-D-erythritol 4-phosphate cytidylyltransferase. The 2-C-methyl-D-erythritol 2,4-cyclodiphosphate synthase stretch occupies residues 225–380 (RLGNGFDVHA…SIATATLVKG (156 aa)). A divalent metal cation-binding residues include Asp231 and His233. 4-CDP-2-C-methyl-D-erythritol 2-phosphate contacts are provided by residues 231 to 233 (DVH) and 257 to 258 (HS). His265 lines the a divalent metal cation pocket. 4-CDP-2-C-methyl-D-erythritol 2-phosphate-binding positions include 279 to 281 (DIG), 355 to 358 (TTSE), Phe362, and Arg365.

In the N-terminal section; belongs to the IspD/TarI cytidylyltransferase family. IspD subfamily. The protein in the C-terminal section; belongs to the IspF family. Requires a divalent metal cation as cofactor.

It carries out the reaction 2-C-methyl-D-erythritol 4-phosphate + CTP + H(+) = 4-CDP-2-C-methyl-D-erythritol + diphosphate. The enzyme catalyses 4-CDP-2-C-methyl-D-erythritol 2-phosphate = 2-C-methyl-D-erythritol 2,4-cyclic diphosphate + CMP. It functions in the pathway isoprenoid biosynthesis; isopentenyl diphosphate biosynthesis via DXP pathway; isopentenyl diphosphate from 1-deoxy-D-xylulose 5-phosphate: step 2/6. It participates in isoprenoid biosynthesis; isopentenyl diphosphate biosynthesis via DXP pathway; isopentenyl diphosphate from 1-deoxy-D-xylulose 5-phosphate: step 4/6. In terms of biological role, bifunctional enzyme that catalyzes the formation of 4-diphosphocytidyl-2-C-methyl-D-erythritol from CTP and 2-C-methyl-D-erythritol 4-phosphate (MEP) (IspD), and catalyzes the conversion of 4-diphosphocytidyl-2-C-methyl-D-erythritol 2-phosphate (CDP-ME2P) to 2-C-methyl-D-erythritol 2,4-cyclodiphosphate (ME-CPP) with a corresponding release of cytidine 5-monophosphate (CMP) (IspF). The polypeptide is Bifunctional enzyme IspD/IspF (Paracoccus denitrificans (strain Pd 1222)).